The chain runs to 401 residues: Multidrug resistance protein MdtA (401 aa).

A signal peptide spans 1-20 (MNQNNKHRTLLFRAALAAIA).

The protein belongs to the membrane fusion protein (MFP) (TC 8.A.1) family. As to quaternary structure, part of a tripartite efflux system composed of MdtA, MdtB and MdtC.

The protein resides in the cell inner membrane. This is Multidrug resistance protein MdtA from Photorhabdus laumondii subsp. laumondii (strain DSM 15139 / CIP 105565 / TT01) (Photorhabdus luminescens subsp. laumondii).